The primary structure comprises 304 residues: Recombination-associated protein RdgC (304 aa).

The protein belongs to the RdgC family.

The protein resides in the cytoplasm. It localises to the nucleoid. In terms of biological role, may be involved in recombination. This chain is Recombination-associated protein RdgC, found in Shewanella sp. (strain ANA-3).